Reading from the N-terminus, the 157-residue chain is Large ribosomal subunit protein bL34c (157 aa).

A chloroplast-targeting transit peptide spans 1–97 (MASLSTSVVA…GQRRRGLVVR (97 aa)).

It belongs to the bacterial ribosomal protein bL34 family. As to quaternary structure, part of the 50S ribosomal subunit.

Its subcellular location is the plastid. The protein localises to the chloroplast. In terms of biological role, this protein binds directly to 23S ribosomal RNA. This is Large ribosomal subunit protein bL34c (RPL34) from Arabidopsis thaliana (Mouse-ear cress).